Reading from the N-terminus, the 272-residue chain is Phosphate import ATP-binding protein PstB (272 aa).

An ABC transporter domain is found at 26–267 (LDIKNLDLYY…PSEKQTEDYI (242 aa)). Residue 58–65 (GPSGCGKS) coordinates ATP.

The protein belongs to the ABC transporter superfamily. Phosphate importer (TC 3.A.1.7) family. As to quaternary structure, the complex is composed of two ATP-binding proteins (PstB), two transmembrane proteins (PstC and PstA) and a solute-binding protein (PstS).

It localises to the cell inner membrane. The enzyme catalyses phosphate(out) + ATP + H2O = ADP + 2 phosphate(in) + H(+). In terms of biological role, part of the ABC transporter complex PstSACB involved in phosphate import. Responsible for energy coupling to the transport system. This chain is Phosphate import ATP-binding protein PstB, found in Idiomarina loihiensis (strain ATCC BAA-735 / DSM 15497 / L2-TR).